The following is a 452-amino-acid chain: MGQKIHAFMFPWFAFGHMTPYLHLGNKLAEKGHRVTFLLPKKAQKQLEHQNLFPHGIVFHPLVIPHVDGLPAGAETASDIPISLVKFLSIAMDLTRDQIEAAIGALRPDLILFDLAHWVPEMAKALKVKSMLYNVMSATSIAHDLVPGGELGVAPPGYPSSKALYREHDAHALLTFSGFYKRFYHRFTTGLMNCDFISIRTCEEIEGKFCDYIESQYKKKVLLTGPMLPEPDKSKPLEDQWSHWLSGFGQGSVVFCALGSQTILEKNQFQELCLGIELTGLPFLVAVKPPKGANTIHEALPEGFEERVKGRGIVWGEWVQQPSWQPLILAHPSVGCFVSHCGFGSMWESLMSDCQIVFIPVLNDQVLTTRVMTEELEVSVEVQREETGWFSKENLSGAIMSLMDQDSEIGNQVRRNHSKLKETLASPGLLTGYTDKFVDTLENLVNEQGYIS.

Residues serine 260, 319–325 (VQQPSWQ), 340–348 (HCGFGSMWE), and 362–365 (LNDQ) contribute to the UDP-alpha-D-glucose site.

The protein belongs to the UDP-glycosyltransferase family.

In Arabidopsis thaliana (Mouse-ear cress), this protein is UDP-glycosyltransferase 79B11 (UGT79B11).